The following is a 133-amino-acid chain: Hemiptericin (133 aa).

Functionally, antibacterial peptide. Affects Gram-negative bacteria. In Pyrrhocoris apterus (Sap sucking bug), this protein is Hemiptericin.